The sequence spans 82 residues: MNKPVHNNEHRRKRFNKKCPFVSAGWKTIDYKDTETLKKFITERGKILPRRITGVSSRFQGTLTLAIKRARHIGLLPFVAED.

Belongs to the bacterial ribosomal protein bS18 family. Part of the 30S ribosomal subunit. Forms a tight heterodimer with protein bS6.

Binds as a heterodimer with protein bS6 to the central domain of the 16S rRNA, where it helps stabilize the platform of the 30S subunit. This chain is Small ribosomal subunit protein bS18, found in Chlamydia caviae (strain ATCC VR-813 / DSM 19441 / 03DC25 / GPIC) (Chlamydophila caviae).